A 437-amino-acid polypeptide reads, in one-letter code: Epsilon-sarcoglycan (437 aa).

At 1–317 (MQLPRWWELG…LKSRDYYTDF (317 aa)) the chain is on the extracellular side. N-linked (GlcNAc...) asparagine glycosylation occurs at asparagine 200. A helical membrane pass occupies residues 318-338 (LITLAVPSAVALVLFLILAYI). At 339–437 (MCCRREGVEK…QQQTTGKWYP (99 aa)) the chain is on the cytoplasmic side.

Belongs to the sarcoglycan alpha/epsilon family. Post-translationally, N-glycosylated. Ubiquitinated, leading to its degradation by the proteasome. Ubiquitous.

The protein localises to the cell membrane. The protein resides in the sarcolemma. It localises to the cytoplasm. Its subcellular location is the cytoskeleton. It is found in the cell projection. The protein localises to the dendrite. The protein resides in the golgi apparatus. In terms of biological role, component of the sarcoglycan complex, a subcomplex of the dystrophin-glycoprotein complex which forms a link between the F-actin cytoskeleton and the extracellular matrix. The protein is Epsilon-sarcoglycan (SGCE) of Homo sapiens (Human).